The chain runs to 137 residues: MLQPKRTKFRKQFKGRIHGVAKGGTELNFGEFGLKALEPERVTARQIEAARRALTRHMKRAGRVWIRVFPDVPVTSKPTEVRMGKGKGAPEYWAAKVKPGRIMFEIDGVPVDLAREALTLAAAKLPIKTRFIQRIAE.

It belongs to the universal ribosomal protein uL16 family. In terms of assembly, part of the 50S ribosomal subunit.

Binds 23S rRNA and is also seen to make contacts with the A and possibly P site tRNAs. The polypeptide is Large ribosomal subunit protein uL16 (Azorhizobium caulinodans (strain ATCC 43989 / DSM 5975 / JCM 20966 / LMG 6465 / NBRC 14845 / NCIMB 13405 / ORS 571)).